The sequence spans 181 residues: Alkyl hydroperoxide reductase AhpD (181 aa).

The active-site Proton donor is C131. Residues C131 and C134 are joined by a disulfide bond. C134 acts as the Cysteine sulfenic acid (-SOH) intermediate in catalysis.

This sequence belongs to the AhpD family.

It carries out the reaction N(6)-[(R)-dihydrolipoyl]-L-lysyl-[lipoyl-carrier protein] + a hydroperoxide = N(6)-[(R)-lipoyl]-L-lysyl-[lipoyl-carrier protein] + an alcohol + H2O. Its function is as follows. Antioxidant protein with alkyl hydroperoxidase activity. Required for the reduction of the AhpC active site cysteine residues and for the regeneration of the AhpC enzyme activity. The sequence is that of Alkyl hydroperoxide reductase AhpD from Rhodopseudomonas palustris (strain BisB18).